The following is a 320-amino-acid chain: Variant surface glycoprotein ILTAT 1.2 (320 aa).

Asn-146, Asn-282, and Asn-295 each carry an N-linked (GlcNAc...) asparagine glycan. The segment at 297–320 (TKATENGVPVAQTQTGGSETTTEK) is disordered. Over residues 308–320 (QTQTGGSETTTEK) the composition is skewed to low complexity.

It is found in the cell membrane. In terms of biological role, VSG forms a coat on the surface of the parasite. The trypanosome evades the immune response of the host by expressing a series of antigenically distinct VSGs from an estimated 1000 VSG genes. The chain is Variant surface glycoprotein ILTAT 1.2 from Trypanosoma brucei brucei.